We begin with the raw amino-acid sequence, 417 residues long: Lipoyl synthase, mitochondrial (417 aa).

The disordered stretch occupies residues 35 to 56 (EANPTDLAGLKRKAKRRPTKLA). Over residues 44–53 (LKRKAKRRPT) the composition is skewed to basic residues. Positions 122, 127, 133, 152, 156, 159, and 367 each coordinate [4Fe-4S] cluster. Residues 137-356 (KKSEATATIM…RDKALEMGFL (220 aa)) form the Radical SAM core domain. Residues 389–417 (IEEQQHDKENNNLLLSKEDEKTTQEKANF) form a disordered region. Over residues 391–417 (EQQHDKENNNLLLSKEDEKTTQEKANF) the composition is skewed to basic and acidic residues.

The protein belongs to the radical SAM superfamily. Lipoyl synthase family. The cofactor is [4Fe-4S] cluster.

It is found in the mitochondrion. The enzyme catalyses [[Fe-S] cluster scaffold protein carrying a second [4Fe-4S](2+) cluster] + N(6)-octanoyl-L-lysyl-[protein] + 2 oxidized [2Fe-2S]-[ferredoxin] + 2 S-adenosyl-L-methionine + 4 H(+) = [[Fe-S] cluster scaffold protein] + N(6)-[(R)-dihydrolipoyl]-L-lysyl-[protein] + 4 Fe(3+) + 2 hydrogen sulfide + 2 5'-deoxyadenosine + 2 L-methionine + 2 reduced [2Fe-2S]-[ferredoxin]. Its pathway is protein modification; protein lipoylation via endogenous pathway; protein N(6)-(lipoyl)lysine from octanoyl-[acyl-carrier-protein]: step 2/2. Functionally, catalyzes the radical-mediated insertion of two sulfur atoms into the C-6 and C-8 positions of the octanoyl moiety bound to the lipoyl domains of lipoate-dependent enzymes, thereby converting the octanoylated domains into lipoylated derivatives. The protein is Lipoyl synthase, mitochondrial of Komagataella phaffii (strain GS115 / ATCC 20864) (Yeast).